Here is a 406-residue protein sequence, read N- to C-terminus: MTKSNTINRIGTPLSATATKVMLLGSGELGKEVIISLQRLGVEVIAVDRYSNAPGHQVAHRSYVIDMTDEVALAELINQEKPDLIVPEIEAIATAKLVELENAGTIRVIPTARAAWLTMDREGIRRLAAEELGCATSPYRFADNLKELQAGCAEIGFPCIVKPVMSSSGKGQSKLSSSADVAAAWDCAAAGGRVDSGRVIVEGFIDFEYEITLLTVRAIGADGEVHTHFCEPIGHVQVNGDYVESWQPQRMHPGALQKAHEIAKRVTDNLGGLGLFGVELFVKDDMVWFSEVSPRPHDTGMVTMASQEQSEFELHAKAILGLPVNVALSTPAASAVIYGRHDGKVVSFEGVAEALHIPGTDIRLFGKPESFARRRMGVALAKAADVDTARKNAKAAAAKVNPVVSS.

Residues 28–29 and Glu88 contribute to the N(1)-(5-phospho-beta-D-ribosyl)glycinamide site; that span reads EL. ATP is bound by residues Arg121, Lys162, 167 to 172, 202 to 205, and Glu210; these read SSGKGQ and EGFI. In terms of domain architecture, ATP-grasp spans 126 to 320; the sequence is RLAAEELGCA…EFELHAKAIL (195 aa). Mg(2+)-binding residues include Glu279 and Glu291. Residues Asp298, Lys367, and 374-375 contribute to the N(1)-(5-phospho-beta-D-ribosyl)glycinamide site; that span reads RR.

It belongs to the PurK/PurT family. Homodimer.

The catalysed reaction is N(1)-(5-phospho-beta-D-ribosyl)glycinamide + formate + ATP = N(2)-formyl-N(1)-(5-phospho-beta-D-ribosyl)glycinamide + ADP + phosphate + H(+). Its pathway is purine metabolism; IMP biosynthesis via de novo pathway; N(2)-formyl-N(1)-(5-phospho-D-ribosyl)glycinamide from N(1)-(5-phospho-D-ribosyl)glycinamide (formate route): step 1/1. In terms of biological role, involved in the de novo purine biosynthesis. Catalyzes the transfer of formate to 5-phospho-ribosyl-glycinamide (GAR), producing 5-phospho-ribosyl-N-formylglycinamide (FGAR). Formate is provided by PurU via hydrolysis of 10-formyl-tetrahydrofolate. This chain is Formate-dependent phosphoribosylglycinamide formyltransferase, found in Janthinobacterium sp. (strain Marseille) (Minibacterium massiliensis).